The chain runs to 755 residues: 3-isopropylmalate dehydratase (755 aa).

3 residues coordinate [4Fe-4S] cluster: Cys-353, Cys-413, and Cys-416. Disordered stretches follow at residues 427–446 (GERCASTSNRNFEGRQGAGG), 471–493 (LTPAQQDRPASPTPKKIETELEP), and 510–529 (DAPATGASPPSPAPSDAAGM). Residues 510–528 (DAPATGASPPSPAPSDAAG) are compositionally biased toward low complexity.

The protein belongs to the aconitase/IPM isomerase family. Monomer. [4Fe-4S] cluster is required as a cofactor.

It carries out the reaction (2R,3S)-3-isopropylmalate = (2S)-2-isopropylmalate. The protein operates within amino-acid biosynthesis; L-leucine biosynthesis; L-leucine from 3-methyl-2-oxobutanoate: step 2/4. Catalyzes the isomerization between 2-isopropylmalate and 3-isopropylmalate, via the formation of 2-isopropylmaleate. In Rhizomucor pusillus, this protein is 3-isopropylmalate dehydratase (LEUA).